We begin with the raw amino-acid sequence, 135 residues long: Transcriptional regulator HosA (135 aa).

The region spanning 4-134 (RNKAFHQLRQ…FMQLVRKMMN (131 aa)) is the HTH marR-type domain. The segment at residues 48-71 (QVALIEAAVSTKATLAEMLARMEN) is a DNA-binding region (H-T-H motif).

In terms of biological role, involved in the temperature-dependent positive control of flagellum-driven swimming motility and cellular aggregation. Regulates fliC expression by directly interacting with fliC promoter. This chain is Transcriptional regulator HosA (hosA), found in Escherichia coli O127:H6 (strain E2348/69 / EPEC).